We begin with the raw amino-acid sequence, 517 residues long: MSDDHSIHSHTQGLHHIKKKRVGKACDSCRIKKTKCDGKKPCNRCTLDNKICVFTEKKKTKEKKHPSGYVELLEARLDILTRSLEKLIELSRPHLQFIDDIITEEKSVDQEKSSPASSTPNSSSSDHHDDVEEQNSTGVVAPINKVVSYLIKEQGLLKNIPLEWEQGTEIAANFDPNRNLKSSSRLFAEHKGEAFIGSPVTSPQQMPTSNPFRRTSMFKEELESPSSDHYNESIFSQSVDEPYIKKEPNSAQFSKGTFSPQQQQLQQQQQMLNQFSLNTSRDISDIESDSSNKEDGLNSGSVSPPTSNYRSFSLFSDSNGEPILGKTSSLTSLTNKYENHSLSSPQTAINPVFNNSTTGPILTTLRRNSSSHSQKTLGSIQLQQKPRGSVHKPVRNHSRVSSFDKRMESTATAAATVAAVSGSVQLSQNTTPQNLPHLDNSQNNNYLRDNGMNNIGAGSVGGGLTFGAPSFTQPLSPSDDAIVYPTNQFTNRPATVSTFGGGLDVLVDNSLDPFFNI.

A DNA-binding region (zn(2)-C6 fungal-type) is located at residues 26 to 52 (CDSCRIKKTKCDGKKPCNRCTLDNKIC). 4 disordered regions span residues 106-137 (KSVD…QNST), 250-270 (SAQF…QQQQ), 284-307 (SDIE…PPTS), and 378-403 (GSIQ…VSSF). Residues 113–124 (SSPASSTPNSSS) are compositionally biased toward low complexity. Polar residues predominate over residues 250-260 (SAQFSKGTFSP). Over residues 261-270 (QQQQLQQQQQ) the composition is skewed to low complexity. Over residues 298–307 (NSGSVSPPTS) the composition is skewed to polar residues. Positions 388 to 398 (GSVHKPVRNHS) are enriched in basic residues.

The protein localises to the nucleus. Transcription factor that acts as a negative regulator of fluconazole resistance in C.albicans. Also confers fluconazole resistance in S.cerevisiae by activation of the PDR5 gene. The protein is Fluconazole resistance protein 1 (FCR1) of Candida albicans (Yeast).